Consider the following 244-residue polypeptide: Uridylate kinase (244 aa).

Lysine 17–glycine 20 is a binding site for ATP. A UMP-binding site is contributed by glycine 59. The ATP site is built by glycine 60 and arginine 64. Residues aspartate 79 and threonine 140 to threonine 147 each bind UMP. ATP is bound by residues threonine 167, tyrosine 173, and aspartate 176.

Belongs to the UMP kinase family. Homohexamer.

The protein resides in the cytoplasm. It carries out the reaction UMP + ATP = UDP + ADP. It participates in pyrimidine metabolism; CTP biosynthesis via de novo pathway; UDP from UMP (UMPK route): step 1/1. Its activity is regulated as follows. Inhibited by UTP. In terms of biological role, catalyzes the reversible phosphorylation of UMP to UDP. This chain is Uridylate kinase, found in Hahella chejuensis (strain KCTC 2396).